A 404-amino-acid chain; its full sequence is Ubiquitin-like modifier-activating enzyme 5 (404 aa).

Position 45 is a phosphoserine (S45). ATP-binding residues include G83, D104, K127, N150, and N184. Residues C226 and C229 each coordinate Zn(2+). The active-site Glycyl thioester intermediate is the C250. Residues C303 and C308 each contribute to the Zn(2+) site. A UFM1-interacting sequence (UIS) motif is present at residues 334-346 (IIHEDNEWGIELV). A linker region spans residues 347–377 (SEVSEEELKNSSGPVPDLPEGITVAYTIPKK). Phosphoserine is present on residues S358 and S393. The short motif at 389–404 (DSGESLEDLMAKMKNM) is the UFC1-binding sequence (UFC) element.

The protein belongs to the ubiquitin-activating E1 family. UBA5 subfamily. In terms of assembly, homodimer; homodimerization is required for UFM1 activation. Interacts (via UIS motif) with UFM1; binds UFM1 via a trans-binding mechanism in which UFM1 interacts with distinct sites in both subunits of the UBA5 homodimer. Interacts (via C-terminus) with UFC1. Interacts (via UIS motif) with GABARAPL2 and, with lower affinity, with GABARAP and GABARAPL1.

It localises to the cytoplasm. The protein localises to the nucleus. Its subcellular location is the endoplasmic reticulum membrane. The protein resides in the golgi apparatus. E1-like enzyme which specifically catalyzes the first step in ufmylation. Activates UFM1 by first adenylating its C-terminal glycine residue with ATP, and thereafter linking this residue to the side chain of a cysteine residue in E1, yielding a UFM1-E1 thioester and free AMP. Activates UFM1 via a trans-binding mechanism, in which UFM1 interacts with distinct sites in both subunits of the UBA5 homodimer. Trans-binding also promotes stabilization of the UBA5 homodimer, and enhances ATP-binding. Transfer of UFM1 from UBA5 to the E2-like enzyme UFC1 also takes place using a trans mechanism. Ufmylation plays a key role in various processes, such as ribosome recycling, response to DNA damage, interferon response or reticulophagy (also called ER-phagy). Ufmylation is essential for erythroid differentiation of both megakaryocytes and erythrocytes. The polypeptide is Ubiquitin-like modifier-activating enzyme 5 (Pongo abelii (Sumatran orangutan)).